Reading from the N-terminus, the 33-residue chain is Photosystem II reaction center protein Psb30 (33 aa).

The helical transmembrane segment at 5–25 (VIAQLTVLTLMVVSGPLVIVL) threads the bilayer.

It belongs to the Psb30/Ycf12 family. In terms of assembly, PSII is composed of 1 copy each of membrane proteins PsbA, PsbB, PsbC, PsbD, PsbE, PsbF, PsbH, PsbI, PsbJ, PsbK, PsbL, PsbM, PsbT, PsbX, PsbY, PsbZ, Psb30/Ycf12, peripheral proteins of the oxygen-evolving complex and a large number of cofactors. It forms dimeric complexes.

It localises to the plastid. Its subcellular location is the chloroplast thylakoid membrane. In terms of biological role, a core subunit of photosystem II (PSII), probably helps stabilize the reaction center. The sequence is that of Photosystem II reaction center protein Psb30 from Pinus koraiensis (Korean pine).